The sequence spans 104 residues: Large ribosomal subunit protein uL24 (104 aa).

This sequence belongs to the universal ribosomal protein uL24 family. In terms of assembly, part of the 50S ribosomal subunit.

Its function is as follows. One of two assembly initiator proteins, it binds directly to the 5'-end of the 23S rRNA, where it nucleates assembly of the 50S subunit. In terms of biological role, one of the proteins that surrounds the polypeptide exit tunnel on the outside of the subunit. In Clostridium botulinum (strain Eklund 17B / Type B), this protein is Large ribosomal subunit protein uL24.